A 475-amino-acid polypeptide reads, in one-letter code: ATP synthase subunit beta (475 aa).

ATP is bound at residue 161–168 (GGAGVGKT).

This sequence belongs to the ATPase alpha/beta chains family. F-type ATPases have 2 components, CF(1) - the catalytic core - and CF(0) - the membrane proton channel. CF(1) has five subunits: alpha(3), beta(3), gamma(1), delta(1), epsilon(1). CF(0) has three main subunits: a(1), b(2) and c(9-12). The alpha and beta chains form an alternating ring which encloses part of the gamma chain. CF(1) is attached to CF(0) by a central stalk formed by the gamma and epsilon chains, while a peripheral stalk is formed by the delta and b chains.

It localises to the cell membrane. The enzyme catalyses ATP + H2O + 4 H(+)(in) = ADP + phosphate + 5 H(+)(out). In terms of biological role, produces ATP from ADP in the presence of a proton gradient across the membrane. The catalytic sites are hosted primarily by the beta subunits. This chain is ATP synthase subunit beta, found in Mycoplasma mycoides subsp. mycoides SC (strain CCUG 32753 / NCTC 10114 / PG1).